We begin with the raw amino-acid sequence, 407 residues long: Imidazolonepropionase (407 aa).

Positions 74 and 76 each coordinate Fe(3+). Zn(2+)-binding residues include histidine 74 and histidine 76. 4-imidazolone-5-propanoate is bound by residues arginine 83, tyrosine 146, and histidine 179. An N-formimidoyl-L-glutamate-binding site is contributed by tyrosine 146. Histidine 244 is a Fe(3+) binding site. Histidine 244 serves as a coordination point for Zn(2+). Residue glutamine 247 participates in 4-imidazolone-5-propanoate binding. A Fe(3+)-binding site is contributed by aspartate 319. Aspartate 319 is a Zn(2+) binding site. The N-formimidoyl-L-glutamate site is built by asparagine 321 and glycine 323. Threonine 324 is a 4-imidazolone-5-propanoate binding site.

The protein belongs to the metallo-dependent hydrolases superfamily. HutI family. Requires Zn(2+) as cofactor. Fe(3+) is required as a cofactor.

The protein resides in the cytoplasm. The enzyme catalyses 4-imidazolone-5-propanoate + H2O = N-formimidoyl-L-glutamate. Its pathway is amino-acid degradation; L-histidine degradation into L-glutamate; N-formimidoyl-L-glutamate from L-histidine: step 3/3. Its function is as follows. Catalyzes the hydrolytic cleavage of the carbon-nitrogen bond in imidazolone-5-propanoate to yield N-formimidoyl-L-glutamate. It is the third step in the universal histidine degradation pathway. The protein is Imidazolonepropionase of Salmonella arizonae (strain ATCC BAA-731 / CDC346-86 / RSK2980).